The chain runs to 1192 residues: DNA topoisomerase 2 (1192 aa).

Residues Asn64, Asn95, and Gly142 to Lys149 contribute to the ATP site. 3 residues coordinate Mg(2+): Glu438, Asp539, and Asp541. The 468-residue stretch at Ile707–Ile1174 folds into the Topo IIA-type catalytic domain. The active-site O-(5'-phospho-DNA)-tyrosine intermediate is Tyr800.

This sequence belongs to the type II topoisomerase family. Requires Mg(2+) as cofactor. The cofactor is Mn(2+). Ca(2+) is required as a cofactor.

It is found in the host cytoplasm. It catalyses the reaction ATP-dependent breakage, passage and rejoining of double-stranded DNA.. Type II topoisomerase. Processively relaxes supercoiled DNA. Displays DNA-supercoiling activity only when associated with the viral histone-like protein. The protein is DNA topoisomerase 2 (TOP) of African swine fever virus (strain Badajoz 1971 Vero-adapted) (Ba71V).